Here is a 447-residue protein sequence, read N- to C-terminus: N-succinylarginine dihydrolase (447 aa).

Substrate is bound by residues Gly-19–Ser-28, Asn-110, and His-137–Arg-138. The active site involves Glu-174. A substrate-binding site is contributed by Arg-213. The active site involves His-249. The substrate site is built by Asp-251 and Asn-362. Cys-368 acts as the Nucleophile in catalysis.

It belongs to the succinylarginine dihydrolase family. In terms of assembly, homodimer.

It carries out the reaction N(2)-succinyl-L-arginine + 2 H2O + 2 H(+) = N(2)-succinyl-L-ornithine + 2 NH4(+) + CO2. The protein operates within amino-acid degradation; L-arginine degradation via AST pathway; L-glutamate and succinate from L-arginine: step 2/5. In terms of biological role, catalyzes the hydrolysis of N(2)-succinylarginine into N(2)-succinylornithine, ammonia and CO(2). The protein is N-succinylarginine dihydrolase of Nitrosospira multiformis (strain ATCC 25196 / NCIMB 11849 / C 71).